Consider the following 298-residue polypeptide: N-acetylmuramic acid 6-phosphate etherase (298 aa).

Positions 55-218 (IHAQVSGGGR…STGLMIKSGK (164 aa)) constitute an SIS domain. Glutamate 83 (proton donor) is an active-site residue. Residue glutamate 114 is part of the active site.

Belongs to the GCKR-like family. MurNAc-6-P etherase subfamily. In terms of assembly, homodimer.

The enzyme catalyses N-acetyl-D-muramate 6-phosphate + H2O = N-acetyl-D-glucosamine 6-phosphate + (R)-lactate. It participates in amino-sugar metabolism; 1,6-anhydro-N-acetylmuramate degradation. It functions in the pathway amino-sugar metabolism; N-acetylmuramate degradation. Its pathway is cell wall biogenesis; peptidoglycan recycling. Functionally, specifically catalyzes the cleavage of the D-lactyl ether substituent of MurNAc 6-phosphate, producing GlcNAc 6-phosphate and D-lactate. Together with AnmK, is also required for the utilization of anhydro-N-acetylmuramic acid (anhMurNAc) either imported from the medium or derived from its own cell wall murein, and thus plays a role in cell wall recycling. This is N-acetylmuramic acid 6-phosphate etherase from Escherichia coli O7:K1 (strain IAI39 / ExPEC).